Reading from the N-terminus, the 161-residue chain is Myosin regulatory light chain A, smooth adductor muscle (161 aa).

At A1 the chain carries Blocked amino end (Ala). EF-hand domains are found at residues 20–55 (KLMQEMKEAFTMIDQNRDGFIDINDLKEMFSSLGRT) and 89–124 (DTEETLRNAFAMFDELDTKKLNIEYIKDLLENMGDN). Residues D33, N35, D37, and D44 each coordinate Ca(2+).

In terms of biological role, in molluscan muscle, calcium regulation is associated with myosin rather than with actin. Muscle myosin contains two types of light chains: the catalytic light chain, essential for ATPase activity, and the regulatory light chain, a calcium-binding protein responsible for Ca(2+) dependent binding and Ca(2+) dependent Mg-ATPase activity. The chain is Myosin regulatory light chain A, smooth adductor muscle from Mizuhopecten yessoensis (Japanese scallop).